The chain runs to 510 residues: MIEDQALFGYARYGKVDDVVYPSVIASGNGINYGDSDIEILGDRIPRQILYPAKIKQEILETDKLVIIPNGAELVRKPKDLVRIIMDIHSRYGFSKLIMISGISDPYSIPALVYLGISFFDSSILEMEGKMGYRFTPFGIEKADHDVSSENAIFISDMMHIIQRSISDGTLRELIEKAVISSKAAEMVRIADYSYYQDFESVFPVRTPYIKANTIEDLYRPDLIRYRNYISESYVKPDADIALILPCSAKKPYSRSKSHQKVIGALGNLRRFIHEVIVTSPIGIVPRDLEETYPARFYDIPVIGLWYEDEKIMMKRMMSSYMGRNRYRKVIAFIPEDLDFITEAIPYPHEVIEFKSSNLQRLREVIQREIAGGKAVNQKVAKYNSILRYQFGEWILPLVSGYTIRRNYNQDMIVKDGKILFVYNENLGKFTINKASADMFIKNGKFLVEIDDFKPTSNVYAMGVVDATEDIRQEDEVVLVHSGEVRGVGIAKMPARAMIELKKGIAVKVR.

A PUA domain is found at 427 to 510; it reads LGKFTINKAS…LKKGIAVKVR (84 aa).

It belongs to the archaeosine synthase type 1 family. In terms of assembly, forms a robust complex with the archaeosine synthase beta subunit RaSEA, likely an alpha(2)beta(2) heterotetrameric structure. Formation of this complex highly increases lysine transfer activity.

The catalysed reaction is 7-cyano-7-carbaguanosine(15) in tRNA + L-lysine = 7-N-[(5S)-5-amino-5-carboxypentyl]formamidino-7-deazaguanosine(15) in tRNA. It participates in tRNA modification; archaeosine-tRNA biosynthesis. Functionally, functions in the biosynthesis of archaeosine, a modified nucleoside present in the dihydrouridine loop (D-loop) of archaeal tRNAs. Catalyzes the addition of L-lysine to the cyano group of 7-cyano-7-deazaguanine (preQ0)-modified tRNAs at position 15, to generate q0kN15-tRNA, a q0N lysine adduct identified as 7-N-[(5S)-5-amino-5-carboxypentyl]formamidino-7-deazaguanosine. This Thermoplasma acidophilum (strain ATCC 25905 / DSM 1728 / JCM 9062 / NBRC 15155 / AMRC-C165) protein is Archaeosine synthase subunit alpha.